Consider the following 429-residue polypeptide: Glutamate-1-semialdehyde 2,1-aminomutase 2 (429 aa).

Residue Lys-268 is modified to N6-(pyridoxal phosphate)lysine.

The protein belongs to the class-III pyridoxal-phosphate-dependent aminotransferase family. HemL subfamily. In terms of assembly, homodimer. It depends on pyridoxal 5'-phosphate as a cofactor.

It localises to the cytoplasm. It catalyses the reaction (S)-4-amino-5-oxopentanoate = 5-aminolevulinate. Its pathway is porphyrin-containing compound metabolism; protoporphyrin-IX biosynthesis; 5-aminolevulinate from L-glutamyl-tRNA(Glu): step 2/2. The protein is Glutamate-1-semialdehyde 2,1-aminomutase 2 of Bacillus anthracis (strain A0248).